A 242-amino-acid polypeptide reads, in one-letter code: Large ribosomal subunit protein uL30y (242 aa).

Belongs to the universal ribosomal protein uL30 family.

The protein is Large ribosomal subunit protein uL30y (RPL7B) of Arabidopsis thaliana (Mouse-ear cress).